A 189-amino-acid chain; its full sequence is Probable nicotinate-nucleotide adenylyltransferase (189 aa).

The protein belongs to the NadD family.

It carries out the reaction nicotinate beta-D-ribonucleotide + ATP + H(+) = deamido-NAD(+) + diphosphate. The protein operates within cofactor biosynthesis; NAD(+) biosynthesis; deamido-NAD(+) from nicotinate D-ribonucleotide: step 1/1. Functionally, catalyzes the reversible adenylation of nicotinate mononucleotide (NaMN) to nicotinic acid adenine dinucleotide (NaAD). The chain is Probable nicotinate-nucleotide adenylyltransferase from Bacillus cereus (strain AH187).